The sequence spans 306 residues: Acetyl-coenzyme A carboxylase carboxyl transferase subunit beta (306 aa).

Positions 27–296 (LWHKCPSCDA…PRFVAPVIEP (270 aa)) constitute a CoA carboxyltransferase N-terminal domain. Cys31, Cys34, Cys50, and Cys53 together coordinate Zn(2+). The C4-type zinc finger occupies 31–53 (CPSCDAVLYRPELEKTLDVCPKC).

Belongs to the AccD/PCCB family. As to quaternary structure, acetyl-CoA carboxylase is a heterohexamer composed of biotin carboxyl carrier protein (AccB), biotin carboxylase (AccC) and two subunits each of ACCase subunit alpha (AccA) and ACCase subunit beta (AccD). Zn(2+) is required as a cofactor.

The protein resides in the cytoplasm. It carries out the reaction N(6)-carboxybiotinyl-L-lysyl-[protein] + acetyl-CoA = N(6)-biotinyl-L-lysyl-[protein] + malonyl-CoA. Its pathway is lipid metabolism; malonyl-CoA biosynthesis; malonyl-CoA from acetyl-CoA: step 1/1. In terms of biological role, component of the acetyl coenzyme A carboxylase (ACC) complex. Biotin carboxylase (BC) catalyzes the carboxylation of biotin on its carrier protein (BCCP) and then the CO(2) group is transferred by the transcarboxylase to acetyl-CoA to form malonyl-CoA. In Pseudomonas syringae pv. tomato (strain ATCC BAA-871 / DC3000), this protein is Acetyl-coenzyme A carboxylase carboxyl transferase subunit beta.